Here is a 794-residue protein sequence, read N- to C-terminus: Protein SPA1-RELATED 4 (794 aa).

In terms of domain architecture, Protein kinase spans methionine 1 to isoleucine 268. The interval serine 126–lysine 165 is disordered. Over residues alanine 136–lysine 165 the composition is skewed to basic and acidic residues. Positions arginine 272–valine 326 form a coiled coil. 2 disordered regions span residues glutamine 352–lysine 373 and glycine 428–serine 447. A compositionally biased stretch (acidic residues) spans alanine 358 to aspartate 369. WD repeat units lie at residues asparagine 482–arginine 521, alanine 531–glutamate 571, glutamate 574–threonine 614, lysine 616–cysteine 656, glycine 660–asparagine 698, glycine 707–serine 746, and aspartate 762–valine 794. The DWD box motif lies at alanine 635–arginine 649.

Interacts with COP1 and CO. Binds to CRY1 in response to blue light, this interaction prevents SPA1/COP1 complex formation and thus avoid COP1-dependent degradation of the transcription factor HY5 by the proteasome and promotes hypocotyl elongation.

It is found in the nucleus. Repressor of photomorphogenesis in the light. Probably part of the COP1/SPA E3 ubiquitin-protein ligase complex. The sequence is that of Protein SPA1-RELATED 4 (SPA4) from Arabidopsis thaliana (Mouse-ear cress).